Consider the following 232-residue polypeptide: E3 ubiquitin-protein ligase RNF125 (232 aa).

The segment covering 1–10 (MGSVLSTDSG) has biased composition (polar residues). Residues 1–23 (MGSVLSTDSGKSAPASATARALE) form a disordered region. Residue G2 is the site of N-myristoyl glycine attachment. Zn(2+)-binding residues include C37 and C40. Residues 37–76 (CAVCLEVLHQPVRTRCGHVFCRSCIATSLKNNKWTCPYCR) form an RING-type zinc finger. An interaction with the C2HC RNF-type zinc finger region spans residues 43–45 (VLH). C52, H54, C57, C60, C72, C75, C100, and C103 together coordinate Zn(2+). The C2HC RNF-type zinc-finger motif lies at 100–119 (CAECDTLVCLSEMRAHIRTC). Residues 109 to 113 (LSEMR) are interaction with the RING-type zinc finger. Residues H115 and C119 each contribute to the Zn(2+) site. Residues 120-128 (QKYIDKYGP) are linker region. The segment at 210-224 (EEALIRRVLDRSLLE) is required for interaction with ubiquitin and for autoubiquitination.

In terms of assembly, interacts with UBE2D1. Interacts with VCP/p97; leading to recruit RNF125 to RIGI and promote ubiquitination of RIGI. Autoubiquitinated, leading to its subsequent proteasomal degradation. In terms of tissue distribution, predominantly expressed in lymphoid tissues, including bone marrow, spleen and thymus. Also weakly expressed in other tissues. Predominant in the CD4(+) and CD8(+) T-cells, suggesting that it is preferentially confined to T-cells.

Its subcellular location is the golgi apparatus membrane. The catalysed reaction is S-ubiquitinyl-[E2 ubiquitin-conjugating enzyme]-L-cysteine + [acceptor protein]-L-lysine = [E2 ubiquitin-conjugating enzyme]-L-cysteine + N(6)-ubiquitinyl-[acceptor protein]-L-lysine.. It functions in the pathway protein modification; protein ubiquitination. Its function is as follows. E3 ubiquitin-protein ligase that mediates ubiquitination and subsequent proteasomal degradation of target proteins, such as RIGI, MAVS/IPS1, IFIH1/MDA5, JAK1 and p53/TP53. Acts as a negative regulator of type I interferon production by mediating ubiquitination of RIGI at 'Lys-181', leading to RIGI degradation. Mediates ubiquitination and subsequent degradation of p53/TP53. Mediates ubiquitination and subsequent degradation of JAK1. Acts as a positive regulator of T-cell activation. This chain is E3 ubiquitin-protein ligase RNF125, found in Homo sapiens (Human).